The chain runs to 310 residues: Conjugation stage-specific protein (310 aa).

The protein belongs to the archaeal Rpo3/eukaryotic RPB3 RNA polymerase subunit family.

It localises to the nucleus. In terms of biological role, may be a stage-specific RNA polymerase subunit. This Tetrahymena thermophila protein is Conjugation stage-specific protein (CNJC).